The primary structure comprises 162 residues: Sec-independent protein translocase protein TatB (162 aa).

Residues 1–21 (MFDLGWTELLVIGVVALIVVG) traverse the membrane as a helical segment. Disordered stretches follow at residues 69–111 (ATNP…DRAE) and 124–162 (AADR…ETKA). 2 stretches are compositionally biased toward basic and acidic residues: residues 83–111 (ATRD…DRAE) and 124–141 (AADR…KAEE). Over residues 144–155 (AALSATPASTAS) the composition is skewed to low complexity.

The protein belongs to the TatB family. In terms of assembly, the Tat system comprises two distinct complexes: a TatABC complex, containing multiple copies of TatA, TatB and TatC subunits, and a separate TatA complex, containing only TatA subunits. Substrates initially bind to the TatABC complex, which probably triggers association of the separate TatA complex to form the active translocon.

It localises to the cell inner membrane. Functionally, part of the twin-arginine translocation (Tat) system that transports large folded proteins containing a characteristic twin-arginine motif in their signal peptide across membranes. Together with TatC, TatB is part of a receptor directly interacting with Tat signal peptides. TatB may form an oligomeric binding site that transiently accommodates folded Tat precursor proteins before their translocation. In Ruegeria sp. (strain TM1040) (Silicibacter sp.), this protein is Sec-independent protein translocase protein TatB.